Here is a 277-residue protein sequence, read N- to C-terminus: Putative hydroxypyruvate isomerase (277 aa).

Active-site proton donor/acceptor residues include glutamate 150 and glutamate 249.

This sequence belongs to the hyi family.

The enzyme catalyses 3-hydroxypyruvate = 2-hydroxy-3-oxopropanoate. In terms of biological role, catalyzes the reversible isomerization between hydroxypyruvate and 2-hydroxy-3-oxopropanoate (also termed tartronate semialdehyde). This is Putative hydroxypyruvate isomerase (Hyi) from Mus musculus (Mouse).